The sequence spans 128 residues: 3-aminoacrylate deaminase RutC (128 aa).

It belongs to the RutC family.

The catalysed reaction is (Z)-3-aminoacrylate + H2O + H(+) = 3-oxopropanoate + NH4(+). Its function is as follows. Involved in pyrimidine catabolism. Catalyzes the deamination of 3-aminoacrylate to malonic semialdehyde, a reaction that can also occur spontaneously. RutC may facilitate the reaction and modulate the metabolic fitness, rather than catalyzing essential functions. In Pantoea ananatis (strain LMG 20103), this protein is 3-aminoacrylate deaminase RutC.